A 259-amino-acid polypeptide reads, in one-letter code: Phosphate import ATP-binding protein PstB 1 (259 aa).

An ABC transporter domain is found at 7-254; that stretch reads VKPEDVYQIN…PDDHRTKDYI (248 aa). 45 to 52 serves as a coordination point for ATP; the sequence is GPSGCGKS.

Belongs to the ABC transporter superfamily. Phosphate importer (TC 3.A.1.7) family. The complex is composed of two ATP-binding proteins (PstB), two transmembrane proteins (PstC and PstA) and a solute-binding protein (PstS).

The protein resides in the cell membrane. It carries out the reaction phosphate(out) + ATP + H2O = ADP + 2 phosphate(in) + H(+). Part of the ABC transporter complex PstSACB involved in phosphate import. Responsible for energy coupling to the transport system. The chain is Phosphate import ATP-binding protein PstB 1 from Bacillus licheniformis (strain ATCC 14580 / DSM 13 / JCM 2505 / CCUG 7422 / NBRC 12200 / NCIMB 9375 / NCTC 10341 / NRRL NRS-1264 / Gibson 46).